The chain runs to 517 residues: MTKNIHDQRILILDFGSQYTQLVARRVREIGVYCELWSWDVEEADIREFNPDGIILSGGPESVTEENSPRAPQYVFDSGVPVLGVCYGMQTMAEQLGGKVAGSNEREFGYAQVKVSGESAIFKDLEATQDVWMSHGDKVVEIPADFVKVGETDTCPYAAMANEEKKYYGVQFHPEVTHTKGGLQMLENFVLGVCGCERLWTSESIIEDAVARIKEQVGDDEVILGLSGGVDSSVVAMLVHRAIGDKLTCVFVDNGLLRLNEGQQVMDMFGDKFGLNIIKVDAEERFLEALKGKSDPEEKRKTIGHVFVDVFDEESKKLKNAKWLAQGTIYPDVIESAASKTGKAHVIKSHHNVGGLPDDMEMGLVEPLRELFKDEVRKIGLELGLPYNMLYRHPFPGPGLGVRVLGEIKKEYCDLLRRADAIFIEELHAADLYDKVSQAFTVFLPVRSVGVMGDGRKYDWVVSLRAVETIDFMTAHWAHLPYDFLGKVSNRIINEVEGISRVVYDISGKPPATIEWE.

In terms of domain architecture, Glutamine amidotransferase type-1 spans 9-199 (RILILDFGSQ…VLGVCGCERL (191 aa)). Cysteine 86 acts as the Nucleophile in catalysis. Active-site residues include histidine 173 and glutamate 175. Residues 200–392 (WTSESIIEDA…LGLPYNMLYR (193 aa)) form the GMPS ATP-PPase domain. 227–233 (SGGVDSS) contacts ATP.

In terms of assembly, homodimer.

The catalysed reaction is XMP + L-glutamine + ATP + H2O = GMP + L-glutamate + AMP + diphosphate + 2 H(+). The protein operates within purine metabolism; GMP biosynthesis; GMP from XMP (L-Gln route): step 1/1. Its function is as follows. Catalyzes the synthesis of GMP from XMP. This chain is GMP synthase [glutamine-hydrolyzing], found in Vibrio parahaemolyticus serotype O3:K6 (strain RIMD 2210633).